The chain runs to 384 residues: Sodium channel protein Nach (384 aa).

The Extracellular portion of the chain corresponds to alanine 1–serine 319. 2 N-linked (GlcNAc...) asparagine glycosylation sites follow: asparagine 32 and asparagine 215. Residues leucine 320–leucine 340 traverse the membrane as a helical segment. At arginine 341–asparagine 384 the chain is on the cytoplasmic side.

The protein belongs to the amiloride-sensitive sodium channel (TC 1.A.6) family.

It is found in the membrane. Functionally, part of a complex that plays a role in tracheal liquid clearance. Probable role in sodium transport. This chain is Sodium channel protein Nach (Nach), found in Drosophila virilis (Fruit fly).